A 256-amino-acid polypeptide reads, in one-letter code: Coiled-coil domain-containing protein 90B, mitochondrial (256 aa).

The transit peptide at 1 to 42 (MRSRWIWRFLRPDGGGIRWTSTPHGRLSPALRRGFLTTTTKS) directs the protein to the mitochondrion. The stretch at 129 to 167 (LEKSEFANLRAENEKMKIELDQVKQQLTNETSRIRADNK) forms a coiled coil. A helical membrane pass occupies residues 231 to 253 (TIRYLAASVFTCLAIALGFYRFW).

It belongs to the CCDC90 family. Interacts with MCU.

The protein resides in the mitochondrion membrane. The protein is Coiled-coil domain-containing protein 90B, mitochondrial (Ccdc90b) of Mus musculus (Mouse).